A 427-amino-acid polypeptide reads, in one-letter code: Large ribosomal subunit protein uL4 (427 aa).

Ala2 is subject to N-acetylalanine. At Lys14 the chain carries N6-acetyllysine. Omega-N-methylarginine is present on Arg97. Lys106 carries the N6-acetyllysine modification. Lys239 is covalently cross-linked (Glycyl lysine isopeptide (Lys-Gly) (interchain with G-Cter in SUMO2)). An N6-acetyllysine modification is found at Lys259. Thr266 is subject to Phosphothreonine. Residues Ser290 and Ser295 each carry the phosphoserine modification. Residue Arg300 is modified to Citrulline. Lys327 participates in a covalent cross-link: Glycyl lysine isopeptide (Lys-Gly) (interchain with G-Cter in SUMO2). N6-acetyllysine is present on residues Lys333 and Lys353. The residue at position 364 (Lys364) is an N6-acetyllysine; alternate. Residue Lys364 forms a Glycyl lysine isopeptide (Lys-Gly) (interchain with G-Cter in SUMO1); alternate linkage. The residue at position 365 (Ser365) is a Phosphoserine. Residues 369–427 (AAVAGKKPVVGKKGKKAAVGVKKQKKPLVGKKAAATKKPAPEKKPAEKKPTTEEKKPAA) are disordered. The span at 377 to 397 (VVGKKGKKAAVGVKKQKKPLV) shows a compositional bias: basic residues. Residues 407–427 (PAPEKKPAEKKPTTEEKKPAA) show a composition bias toward basic and acidic residues.

Belongs to the universal ribosomal protein uL4 family. In terms of assembly, component of the large ribosomal subunit. May bind IPO9 with low affinity. Interacts with RBM3. Citrullinated by PADI4.

It is found in the cytoplasm. In terms of biological role, component of the large ribosomal subunit. The ribosome is a large ribonucleoprotein complex responsible for the synthesis of proteins in the cell. The polypeptide is Large ribosomal subunit protein uL4 (RPL4) (Homo sapiens (Human)).